The chain runs to 199 residues: Transcriptional regulatory protein DesR (199 aa).

In terms of domain architecture, Response regulatory spans 3-117 (SIFIAEDQQM…ELANAIRSVM (115 aa)). Asp-54 is modified (4-aspartylphosphate). An HTH luxR-type domain is found at 131–196 (LYSEANPLTD…EAITRSKEKG (66 aa)). The H-T-H motif DNA-binding region spans 155 to 174 (TKEIAQELSIKSGTVRNYIS).

Phosphorylated by DesK.

It is found in the cytoplasm. Its function is as follows. Member of the two-component regulatory system DesR/DesK, responsible for cold induction of the des gene coding for the Delta5 acyl-lipid desaturase. This is Transcriptional regulatory protein DesR (desR) from Bacillus subtilis (strain 168).